We begin with the raw amino-acid sequence, 527 residues long: GMP synthase [glutamine-hydrolyzing] (527 aa).

Positions 19-212 constitute a Glutamine amidotransferase type-1 domain; the sequence is KIIVLDYGSQ…AFSICGAKGD (194 aa). Cys96 (nucleophile) is an active-site residue. Residues His186 and Glu188 contribute to the active site. The GMPS ATP-PPase domain occupies 213–402; sequence WSMANFVDMQ…LGMPDEVVWR (190 aa). 240–246 provides a ligand contact to ATP; that stretch reads SGGVDSS.

Homodimer.

It catalyses the reaction XMP + L-glutamine + ATP + H2O = GMP + L-glutamate + AMP + diphosphate + 2 H(+). It participates in purine metabolism; GMP biosynthesis; GMP from XMP (L-Gln route): step 1/1. Catalyzes the synthesis of GMP from XMP. This chain is GMP synthase [glutamine-hydrolyzing], found in Streptococcus thermophilus (strain ATCC BAA-250 / LMG 18311).